Consider the following 106-residue polypeptide: ATP-dependent Clp protease adapter protein ClpS (106 aa).

Residues 1-13 (MGNNSTWSQSENL) are compositionally biased toward polar residues. A disordered region spans residues 1-21 (MGNNSTWSQSENLTADKQKEK).

It belongs to the ClpS family. As to quaternary structure, binds to the N-terminal domain of the chaperone ClpA.

Involved in the modulation of the specificity of the ClpAP-mediated ATP-dependent protein degradation. The sequence is that of ATP-dependent Clp protease adapter protein ClpS from Pectobacterium carotovorum subsp. carotovorum (strain PC1).